Here is a 445-residue protein sequence, read N- to C-terminus: N-succinylarginine dihydrolase (445 aa).

Residues 19-28, Asn110, and 137-138 each bind substrate; these read AGLSYGNVAS and HR. Glu174 is an active-site residue. Arg214 serves as a coordination point for substrate. His250 is an active-site residue. Residues Asp252 and Asn363 each contribute to the substrate site. Residue Cys369 is the Nucleophile of the active site.

Belongs to the succinylarginine dihydrolase family. In terms of assembly, homodimer.

The catalysed reaction is N(2)-succinyl-L-arginine + 2 H2O + 2 H(+) = N(2)-succinyl-L-ornithine + 2 NH4(+) + CO2. It functions in the pathway amino-acid degradation; L-arginine degradation via AST pathway; L-glutamate and succinate from L-arginine: step 2/5. Catalyzes the hydrolysis of N(2)-succinylarginine into N(2)-succinylornithine, ammonia and CO(2). This chain is N-succinylarginine dihydrolase, found in Aeromonas hydrophila subsp. hydrophila (strain ATCC 7966 / DSM 30187 / BCRC 13018 / CCUG 14551 / JCM 1027 / KCTC 2358 / NCIMB 9240 / NCTC 8049).